Here is a 581-residue protein sequence, read N- to C-terminus: Laccase-2 (581 aa).

A signal peptide spans 1 to 19 (MKYSTVFTALTALFAQASA). 2 Plastocyanin-like domains span residues 74-191 (SVEN…GPAT) and 197-353 (DVGA…YDSS). Residues Asn77, Asn93, and Asn120 are each glycosylated (N-linked (GlcNAc...) asparagine). Positions 125, 127, 169, and 171 each coordinate Cu cation. The cysteines at positions 146 and 562 are disulfide-linked. 6 N-linked (GlcNAc...) asparagine glycosylation sites follow: Asn232, Asn283, Asn343, Asn408, Asn427, and Asn441. One can recognise a Plastocyanin-like 3 domain in the interval 413 to 547 (LLDWSSPTTL…AMQFVESQSS (135 aa)). His464, His467, His469, His526, Cys527, His528, and His532 together coordinate Cu cation.

The protein belongs to the multicopper oxidase family. Requires Cu cation as cofactor.

The protein resides in the secreted. It carries out the reaction 4 hydroquinone + O2 = 4 benzosemiquinone + 2 H2O. In terms of biological role, lignin degradation and detoxification of lignin-derived products. The sequence is that of Laccase-2 (lcc2) from Botryotinia fuckeliana (Noble rot fungus).